A 102-amino-acid chain; its full sequence is Small ribosomal subunit protein uS10 (102 aa).

Belongs to the universal ribosomal protein uS10 family. Part of the 30S ribosomal subunit.

Its function is as follows. Involved in the binding of tRNA to the ribosomes. The sequence is that of Small ribosomal subunit protein uS10 from Nitrosospira multiformis (strain ATCC 25196 / NCIMB 11849 / C 71).